Consider the following 366-residue polypeptide: Molybdopterin synthase catalytic subunit (366 aa).

Substrate-binding positions include His-101–Arg-102, Lys-117, and Lys-124–Glu-126.

It belongs to the MoaE family. MOCS2B subfamily. As to quaternary structure, heterotetramer; composed of 2 small (Mocs2A) and 2 large (Mocs2B) subunits.

It is found in the cytoplasm. The catalysed reaction is 2 [molybdopterin-synthase sulfur-carrier protein]-C-terminal-Gly-aminoethanethioate + cyclic pyranopterin phosphate + H2O = molybdopterin + 2 [molybdopterin-synthase sulfur-carrier protein]-C-terminal Gly-Gly + 2 H(+). The protein operates within cofactor biosynthesis; molybdopterin biosynthesis. Catalytic subunit of the molybdopterin synthase complex, a complex that catalyzes the conversion of precursor Z into molybdopterin. Acts by mediating the incorporation of 2 sulfur atoms from thiocarboxylated Mocs2A into precursor Z to generate a dithiolene group. This is Molybdopterin synthase catalytic subunit from Drosophila mojavensis (Fruit fly).